We begin with the raw amino-acid sequence, 513 residues long: Na(+)/H(+) antiporter NhaB (513 aa).

A run of 12 helical transmembrane segments spans residues 23–43 (LALI…PFVA), 52–72 (IFTL…LLAI), 97–117 (LLLM…LFIF), 120–140 (LLLS…AAAF), 144–164 (FLDA…FYGI), 202–222 (LMMH…VGEP), 238–258 (FFLR…LTCL), 303–323 (AIIG…VGLI), 348–368 (TESL…AVII), 391–411 (LFYI…VGTI), 447–467 (ATPN…APLI), and 475–495 (VWMA…CVEF).

The protein belongs to the NhaB Na(+)/H(+) (TC 2.A.34) antiporter family.

It localises to the cell inner membrane. It catalyses the reaction 2 Na(+)(in) + 3 H(+)(out) = 2 Na(+)(out) + 3 H(+)(in). In terms of biological role, na(+)/H(+) antiporter that extrudes sodium in exchange for external protons. This is Na(+)/H(+) antiporter NhaB from Escherichia coli (strain 55989 / EAEC).